A 931-amino-acid polypeptide reads, in one-letter code: Probable ubiquitin-like-specific protease 2B (931 aa).

The segment at 204–224 (SLSDRSALSEASDSEDDEEDW) is disordered. Acidic residues predominate over residues 215-224 (SDSEDDEEDW). Catalysis depends on residues H489, D522, and C577. The interval 825 to 931 (HEEEIDESPP…PTGEAEEMEK (107 aa)) is disordered. Residues 839–851 (SLKSATVGSNTAD) show a composition bias toward polar residues. Residues 873 to 904 (NDRDEEKPLEHDLEIGDKTSEDVGDDCDQKEP) are compositionally biased toward basic and acidic residues.

It belongs to the peptidase C48 family.

In terms of biological role, protease that catalyzes two essential functions in the SUMO pathway: processing of full-length SUMOs to their mature forms and deconjugation of SUMO from targeted proteins. The protein is Probable ubiquitin-like-specific protease 2B (ULP2B) of Arabidopsis thaliana (Mouse-ear cress).